Reading from the N-terminus, the 159-residue chain is Ribosomal RNA large subunit methyltransferase H (159 aa).

Residues L76, G108, and 127-132 contribute to the S-adenosyl-L-methionine site; that span reads FSKMTL.

It belongs to the RNA methyltransferase RlmH family. Homodimer.

It localises to the cytoplasm. It catalyses the reaction pseudouridine(1915) in 23S rRNA + S-adenosyl-L-methionine = N(3)-methylpseudouridine(1915) in 23S rRNA + S-adenosyl-L-homocysteine + H(+). Functionally, specifically methylates the pseudouridine at position 1915 (m3Psi1915) in 23S rRNA. This is Ribosomal RNA large subunit methyltransferase H from Bacillus thuringiensis subsp. konkukian (strain 97-27).